A 282-amino-acid chain; its full sequence is Elongation factor Ts (282 aa).

Residues 81-84 (TDFV) are involved in Mg(2+) ion dislocation from EF-Tu. The span at 218–270 (KPAQPAQVAEVAAAPPAEPVADQPAAEPPAESVAPEPVVAESADAEPAPAAEG) shows a compositional bias: low complexity. Residues 218-282 (KPAQPAQVAE…SKKGSTKKKK (65 aa)) are disordered. Residues 273–282 (SKKGSTKKKK) show a composition bias toward basic residues.

It belongs to the EF-Ts family.

The protein localises to the cytoplasm. Associates with the EF-Tu.GDP complex and induces the exchange of GDP to GTP. It remains bound to the aminoacyl-tRNA.EF-Tu.GTP complex up to the GTP hydrolysis stage on the ribosome. This Synechococcus sp. (strain JA-3-3Ab) (Cyanobacteria bacterium Yellowstone A-Prime) protein is Elongation factor Ts.